Reading from the N-terminus, the 236-residue chain is Phosphoribosylaminoimidazole-succinocarboxamide synthase (236 aa).

It belongs to the SAICAR synthetase family.

It carries out the reaction 5-amino-1-(5-phospho-D-ribosyl)imidazole-4-carboxylate + L-aspartate + ATP = (2S)-2-[5-amino-1-(5-phospho-beta-D-ribosyl)imidazole-4-carboxamido]succinate + ADP + phosphate + 2 H(+). The protein operates within purine metabolism; IMP biosynthesis via de novo pathway; 5-amino-1-(5-phospho-D-ribosyl)imidazole-4-carboxamide from 5-amino-1-(5-phospho-D-ribosyl)imidazole-4-carboxylate: step 1/2. The sequence is that of Phosphoribosylaminoimidazole-succinocarboxamide synthase from Chlorobium phaeobacteroides (strain BS1).